The following is a 209-amino-acid chain: Uracil phosphoribosyltransferase (209 aa).

Residues Arg-79, Arg-104, and 131 to 139 contribute to the 5-phospho-alpha-D-ribose 1-diphosphate site; that span reads DPMLATGGS. Uracil contacts are provided by residues Ile-194 and 199–201; that span reads GDA. Position 200 (Asp-200) interacts with 5-phospho-alpha-D-ribose 1-diphosphate.

It belongs to the UPRTase family. Requires Mg(2+) as cofactor.

The catalysed reaction is UMP + diphosphate = 5-phospho-alpha-D-ribose 1-diphosphate + uracil. The protein operates within pyrimidine metabolism; UMP biosynthesis via salvage pathway; UMP from uracil: step 1/1. With respect to regulation, allosterically activated by GTP. Catalyzes the conversion of uracil and 5-phospho-alpha-D-ribose 1-diphosphate (PRPP) to UMP and diphosphate. The protein is Uracil phosphoribosyltransferase of Streptococcus equi subsp. zooepidemicus (strain MGCS10565).